The sequence spans 338 residues: Lipoyl synthase (338 aa).

The tract at residues 1–24 (MTTVQEAVPNLIPTQDATPRPAPK) is disordered. [4Fe-4S] cluster is bound by residues Cys84, Cys89, Cys95, Cys110, Cys114, Cys117, and Ser324. Residues 96–313 (FSGGTATFMI…AEEGYKMGFK (218 aa)) form the Radical SAM core domain.

Belongs to the radical SAM superfamily. Lipoyl synthase family. The cofactor is [4Fe-4S] cluster.

It is found in the cytoplasm. It catalyses the reaction [[Fe-S] cluster scaffold protein carrying a second [4Fe-4S](2+) cluster] + N(6)-octanoyl-L-lysyl-[protein] + 2 oxidized [2Fe-2S]-[ferredoxin] + 2 S-adenosyl-L-methionine + 4 H(+) = [[Fe-S] cluster scaffold protein] + N(6)-[(R)-dihydrolipoyl]-L-lysyl-[protein] + 4 Fe(3+) + 2 hydrogen sulfide + 2 5'-deoxyadenosine + 2 L-methionine + 2 reduced [2Fe-2S]-[ferredoxin]. It participates in protein modification; protein lipoylation via endogenous pathway; protein N(6)-(lipoyl)lysine from octanoyl-[acyl-carrier-protein]: step 2/2. In terms of biological role, catalyzes the radical-mediated insertion of two sulfur atoms into the C-6 and C-8 positions of the octanoyl moiety bound to the lipoyl domains of lipoate-dependent enzymes, thereby converting the octanoylated domains into lipoylated derivatives. The protein is Lipoyl synthase of Pseudomonas putida (strain W619).